We begin with the raw amino-acid sequence, 220 residues long: Deoxyribose-phosphate aldolase (220 aa).

The active-site Proton donor/acceptor is aspartate 89. Lysine 151 acts as the Schiff-base intermediate with acetaldehyde in catalysis. The active-site Proton donor/acceptor is the lysine 180.

This sequence belongs to the DeoC/FbaB aldolase family. DeoC type 1 subfamily.

The protein localises to the cytoplasm. The enzyme catalyses 2-deoxy-D-ribose 5-phosphate = D-glyceraldehyde 3-phosphate + acetaldehyde. Its pathway is carbohydrate degradation; 2-deoxy-D-ribose 1-phosphate degradation; D-glyceraldehyde 3-phosphate and acetaldehyde from 2-deoxy-alpha-D-ribose 1-phosphate: step 2/2. Catalyzes a reversible aldol reaction between acetaldehyde and D-glyceraldehyde 3-phosphate to generate 2-deoxy-D-ribose 5-phosphate. This Streptococcus equi subsp. equi (strain 4047) protein is Deoxyribose-phosphate aldolase.